The chain runs to 107 residues: Nucleoid-associated protein PPA0205 (107 aa).

It belongs to the YbaB/EbfC family. Homodimer.

The protein resides in the cytoplasm. It is found in the nucleoid. Functionally, binds to DNA and alters its conformation. May be involved in regulation of gene expression, nucleoid organization and DNA protection. This Cutibacterium acnes (strain DSM 16379 / KPA171202) (Propionibacterium acnes) protein is Nucleoid-associated protein PPA0205.